Here is a 126-residue protein sequence, read N- to C-terminus: Phosphoribosyl-AMP cyclohydrolase (126 aa).

Mg(2+) is bound at residue Asp82. Cys83 contacts Zn(2+). Mg(2+) contacts are provided by Asp84 and Asp86. The Zn(2+) site is built by Cys99 and Cys106.

This sequence belongs to the PRA-CH family. As to quaternary structure, homodimer. It depends on Mg(2+) as a cofactor. Zn(2+) serves as cofactor.

It localises to the cytoplasm. The enzyme catalyses 1-(5-phospho-beta-D-ribosyl)-5'-AMP + H2O = 1-(5-phospho-beta-D-ribosyl)-5-[(5-phospho-beta-D-ribosylamino)methylideneamino]imidazole-4-carboxamide. The protein operates within amino-acid biosynthesis; L-histidine biosynthesis; L-histidine from 5-phospho-alpha-D-ribose 1-diphosphate: step 3/9. Functionally, catalyzes the hydrolysis of the adenine ring of phosphoribosyl-AMP. In Sphingopyxis alaskensis (strain DSM 13593 / LMG 18877 / RB2256) (Sphingomonas alaskensis), this protein is Phosphoribosyl-AMP cyclohydrolase.